A 336-amino-acid chain; its full sequence is Inositol 2-dehydrogenase (336 aa).

This sequence belongs to the Gfo/Idh/MocA family. In terms of assembly, homotetramer.

The enzyme catalyses myo-inositol + NAD(+) = scyllo-inosose + NADH + H(+). Its function is as follows. Involved in the oxidation of myo-inositol (MI) to 2-keto-myo-inositol (2KMI or 2-inosose). This Pseudomonas fluorescens (strain ATCC BAA-477 / NRRL B-23932 / Pf-5) protein is Inositol 2-dehydrogenase.